The following is a 395-amino-acid chain: Obg-like ATPase 1 (395 aa).

An OBG-type G domain is found at 22 to 280; it reads LKVGILGLPN…MPEDERQKYL (259 aa). Residue 31–36 coordinates ATP; it reads NVGKST. The Mg(2+) site is built by Ser35 and Thr55. ATP is bound at residue Leu228. The region spanning 301-384 is the TGS domain; sequence QLEYFFTSGE…QDGDVIFFKF (84 aa).

This sequence belongs to the TRAFAC class OBG-HflX-like GTPase superfamily. OBG GTPase family. YchF/OLA1 subfamily. In terms of assembly, monomer. Mg(2+) serves as cofactor. In terms of tissue distribution, expressed in the nervous system, pharyngeal muscles and intestine (at protein level).

It is found in the cytoplasm. In terms of biological role, hydrolyzes ATP, and can also hydrolyze GTP with lower efficiency. Has lower affinity for GTP. Plays a role in regulating starvation-induced thermotaxis responses in AFD thermosensory neurons. The protein is Obg-like ATPase 1 of Caenorhabditis elegans.